Here is a 527-residue protein sequence, read N- to C-terminus: Eukaryotic translation initiation factor 2 subunit gamma (527 aa).

Residues 1 to 83 (MSDLQDQEPS…GLPEQPLNPD (83 aa)) form a disordered region. T60 bears the Phosphothreonine mark. In terms of domain architecture, tr-type G spans 98–307 (QATINIGTIG…IVKTIPVPPR (210 aa)). A G1 region spans residues 107–114 (GHVAHGKS). 110–115 (AHGKST) contributes to the GTP binding site. The tract at residues 135–139 (NITIK) is G2. A G3 region spans residues 193 to 196 (DCPG). A GTP-binding site is contributed by 249-252 (NKVD). The interval 249–252 (NKVD) is G4. S258 carries the phosphoserine modification. 284-286 (SAQ) provides a ligand contact to GTP. A G5 region spans residues 284–286 (SAQ). Positions 515–527 (ATIKKGTTLEPIA) are interacts with CDC123.

It belongs to the TRAFAC class translation factor GTPase superfamily. Classic translation factor GTPase family. EIF2G subfamily. Eukaryotic translation initiation factor 2 eIF2 is a heterotrimeric complex composed of an alpha, a beta and a gamma subunit. The factors eIF-1, eIF-1A, eIF-2, eIF-3, TIF5/eIF-5 and methionyl-tRNAi form a multifactor complex (MFC) that may bind to the 40S ribosome. Interacts (via C-terminus) with CDC123; the interaction is direct. Interacts with GCD1. Interacts with the eIF2B complex subunits GCD6 and GCD7. Interacts with methionyl-initiator methionine tRNA.

Its subcellular location is the cytoplasm. It is found in the cytosol. It carries out the reaction GTP + H2O = GDP + phosphate + H(+). Functionally, as a subunit of eukaryotic initiation factor 2 eIF2, involved in the early steps of protein synthesis. In the presence of GTP, eIF-2 forms a ternary complex with initiator tRNA Met-tRNAi and then recruits the 40S ribosomal complex and initiation factors eIF-1, eIF-1A and eIF-3 to form the 43S pre-initiation complex (43S PIC), a step that determines the rate of protein translation. The 43S PIC binds to mRNA and scans downstream to the initiation codon, where it forms a 48S initiation complex by codon-anticodon base pairing. This leads to the displacement of eIF-1 to allow GTPase-activating protein (GAP) eIF-5-mediated hydrolysis of eIF2-bound GTP. Hydrolysis of GTP and release of Pi, which makes GTP hydrolysis irreversible, causes the release of the eIF-2-GDP binary complex from the 40S subunit, an event that is essential for the subsequent joining of the 60S ribosomal subunit to form an elongation-competent 80S ribosome. In order for eIF-2 to recycle and catalyze another round of initiation, the GDP bound to eIF-2 must be exchanged with GTP by way of a reaction catalyzed by GDP-GTP exchange factor (GEF) eIF-2B. The chain is Eukaryotic translation initiation factor 2 subunit gamma (GCD11) from Saccharomyces cerevisiae (strain ATCC 204508 / S288c) (Baker's yeast).